Reading from the N-terminus, the 622-residue chain is Calmodulin-binding protein 60 C (622 aa).

The span at 1-19 (MQTRYMERTNSMREKRKLE) shows a compositional bias: basic and acidic residues. Residues 1–35 (MQTRYMERTNSMREKRKLEEDDNQQQQQQPERKRP) form a disordered region. The segment at 10–89 (NSMREKRKLE…RLSERSSPKR (80 aa)) is calmodulin-binding. The segment at 159 to 282 (EDDDGWSGEE…AFHKKLNKAG (124 aa)) is DNA-binding.

The protein belongs to the plant ACBP60 protein family. Interacts with calmodulin (CaM). In terms of tissue distribution, expressed in stems, flowers and root.

The protein localises to the nucleus. In terms of biological role, transcription activator that binds DNA in a sequence-specific manner, likely 5'-GAAATTTTGG-3', to promote the expression of target genes. The polypeptide is Calmodulin-binding protein 60 C (Arabidopsis thaliana (Mouse-ear cress)).